The sequence spans 598 residues: 4-coumarate--CoA ligase-like 6 (598 aa).

Residues Ser-232, Ser-233, Gly-234, Thr-235, Thr-236, and Lys-240 each coordinate ATP. Arg-318 provides a ligand contact to CoA. Residues 320–389 (DLAAAARAVE…TVFPSVQIVQ (70 aa)) are SBD1. Residues Gly-367, Gln-389, and Thr-394 each coordinate (E)-4-coumaroyl-AMP. ATP-binding residues include Gln-389, Thr-394, Asp-475, and Arg-490. Positions 390 to 454 (SYGLTESTGP…IRGPVVMKGY (65 aa)) are SBD2. Residues Lys-492 and Lys-496 each coordinate (E)-4-coumaroyl-AMP. 2 residues coordinate CoA: Lys-498 and Gly-499. An ATP-binding site is contributed by Lys-581.

The protein belongs to the ATP-dependent AMP-binding enzyme family. Mg(2+) is required as a cofactor.

It carries out the reaction (E)-4-coumarate + ATP + CoA = (E)-4-coumaroyl-CoA + AMP + diphosphate. It catalyses the reaction (E)-4-coumarate + ATP + H(+) = (E)-4-coumaroyl-AMP + diphosphate. The catalysed reaction is (E)-4-coumaroyl-AMP + CoA = (E)-4-coumaroyl-CoA + AMP + H(+). In terms of biological role, carboxylate--CoA ligase that may use 4-coumarate as substrate. Follows a two-step reaction mechanism, wherein the carboxylate substrate first undergoes adenylation by ATP, followed by a thioesterification in the presence of CoA to yield the final CoA thioester. This is 4-coumarate--CoA ligase-like 6 (4CLL6) from Oryza sativa subsp. japonica (Rice).